Consider the following 102-residue polypeptide: uncharacterized protein (102 aa).

An N-terminal signal peptide occupies residues Met1–Gly19.

This is an uncharacterized protein from Saccharomyces cerevisiae (strain ATCC 204508 / S288c) (Baker's yeast).